The chain runs to 95 residues: MTFENRNNRKTLTGKVVSAQKTQKTIIVEVDRYKKHLLYGKRFKKTKRYAVHDEAQVAKVNDMVMIMETRPLSKTKHFRLYQVLSTASDVEKEAK.

This sequence belongs to the universal ribosomal protein uS17 family. As to quaternary structure, part of the 30S ribosomal subunit.

Functionally, one of the primary rRNA binding proteins, it binds specifically to the 5'-end of 16S ribosomal RNA. The chain is Small ribosomal subunit protein uS17 from Mycoplasmopsis synoviae (strain 53) (Mycoplasma synoviae).